The chain runs to 97 residues: Defective intron-associated endonuclease 3 (97 aa).

Its function is as follows. This endonuclease is specific to the nrdB gene splice junction and is involved in intron homing. The polypeptide is Defective intron-associated endonuclease 3 (ITEVIIIR) (Escherichia coli (Bacteriophage T4)).